Consider the following 365-residue polypeptide: Chorismate synthase (365 aa).

Residues arginine 48 and arginine 54 each contribute to the NADP(+) site. FMN-binding positions include 129 to 131 (RSS), 241 to 242 (NA), glycine 285, 300 to 304 (KPTSS), and arginine 326.

Belongs to the chorismate synthase family. In terms of assembly, homotetramer. The cofactor is FMNH2.

It catalyses the reaction 5-O-(1-carboxyvinyl)-3-phosphoshikimate = chorismate + phosphate. It participates in metabolic intermediate biosynthesis; chorismate biosynthesis; chorismate from D-erythrose 4-phosphate and phosphoenolpyruvate: step 7/7. Catalyzes the anti-1,4-elimination of the C-3 phosphate and the C-6 proR hydrogen from 5-enolpyruvylshikimate-3-phosphate (EPSP) to yield chorismate, which is the branch point compound that serves as the starting substrate for the three terminal pathways of aromatic amino acid biosynthesis. This reaction introduces a second double bond into the aromatic ring system. The polypeptide is Chorismate synthase (Parvibaculum lavamentivorans (strain DS-1 / DSM 13023 / NCIMB 13966)).